The chain runs to 495 residues: Transcription termination/antitermination protein NusA (495 aa).

In terms of domain architecture, S1 motif spans 135–200 (GEIITGVVKK…RGAQLFVTRS (66 aa)). The KH domain maps to 302-368 (KHTMDIAVEA…FTKYLDIDED (67 aa)). A run of 2 repeats spans residues 364–414 (DIDE…KNAL) and 439–489 (GVDR…RNIC). The segment at 364–489 (DIDEDFATVL…ALIMAARNIC (126 aa)) is 2 X 51 AA approximate repeats.

Belongs to the NusA family. As to quaternary structure, monomer. Binds directly to the core enzyme of the DNA-dependent RNA polymerase and to nascent RNA.

Its subcellular location is the cytoplasm. Its function is as follows. Participates in both transcription termination and antitermination. The polypeptide is Transcription termination/antitermination protein NusA (Shigella flexneri).